We begin with the raw amino-acid sequence, 146 residues long: Hemoglobin subunit beta (146 aa).

The Globin domain maps to 2–146 (HWSAEEKQLI…VAHALARKYH (145 aa)). Heme b contacts are provided by histidine 63 and histidine 92.

Belongs to the globin family. As to quaternary structure, heterotetramer of two alpha chains and two beta chains. Red blood cells.

Functionally, involved in oxygen transport from the lung to the various peripheral tissues. In Stercorarius maccormicki (South polar skua), this protein is Hemoglobin subunit beta (HBB).